Here is a 1543-residue protein sequence, read N- to C-terminus: DNA-directed RNA polymerase subunit beta' (1543 aa).

Zn(2+) is bound by residues Cys-60, Cys-62, Cys-75, and Cys-78. Mg(2+)-binding residues include Asp-627, Asp-629, and Asp-631. 4 residues coordinate Zn(2+): Cys-1017, Cys-1097, Cys-1104, and Cys-1107. Disordered stretches follow at residues 1466-1490 (PADR…APPR) and 1522-1543 (AEEG…EENV).

This sequence belongs to the RNA polymerase beta' chain family. In terms of assembly, the RNAP catalytic core consists of 2 alpha, 1 beta, 1 beta' and 1 omega subunit. When a sigma factor is associated with the core the holoenzyme is formed, which can initiate transcription. Mg(2+) is required as a cofactor. Requires Zn(2+) as cofactor.

It catalyses the reaction RNA(n) + a ribonucleoside 5'-triphosphate = RNA(n+1) + diphosphate. Functionally, DNA-dependent RNA polymerase catalyzes the transcription of DNA into RNA using the four ribonucleoside triphosphates as substrates. In Herpetosiphon aurantiacus (strain ATCC 23779 / DSM 785 / 114-95), this protein is DNA-directed RNA polymerase subunit beta'.